We begin with the raw amino-acid sequence, 356 residues long: MFIDSVKITLASGDGGKGAVSFRREKHVPLGGPDGGDGGNGGDIIFVCDNNTHTLVNFKGKRELRAQNGAGGMGRNKNGKKGENLELIVPEGTQVIDAQTNEILLDLTEEGQRELFLKGGKGGLGNTHFKHATNQRPDYAQPGIKGESRLVRLELKLIADVGLVGFPNVGKSTLISVVSNAKPEIANYEFTTLTPKLGLVDVNEYNSFVMADIPGIIEGASGGKGLGLAFLKHIERTSFLLFVLDPMRQMPLKEQFIVLRKELEKFSNELFGRKFGIMISKSDSVRLGEEFAEQIALNINELDNYLKEINNPQSFLIKVSSLEKTGLKELKFMLLEEIKTLRNNKKNFNNLGSVLY.

Positions 1-158 (MFIDSVKITL…RLVRLELKLI (158 aa)) constitute an Obg domain. Residues 159–339 (ADVGLVGFPN…LKFMLLEEIK (181 aa)) form the OBG-type G domain. GTP-binding positions include 165-172 (GFPNVGKS), 190-194 (FTTLT), 212-215 (DIPG), 280-283 (SKSD), and 320-322 (SSL). Positions 172 and 192 each coordinate Mg(2+).

It belongs to the TRAFAC class OBG-HflX-like GTPase superfamily. OBG GTPase family. In terms of assembly, monomer. Requires Mg(2+) as cofactor.

Its subcellular location is the cytoplasm. Its function is as follows. An essential GTPase which binds GTP, GDP and possibly (p)ppGpp with moderate affinity, with high nucleotide exchange rates and a fairly low GTP hydrolysis rate. Plays a role in control of the cell cycle, stress response, ribosome biogenesis and in those bacteria that undergo differentiation, in morphogenesis control. The protein is GTPase Obg of Campylobacter jejuni subsp. jejuni serotype O:23/36 (strain 81-176).